Consider the following 165-residue polypeptide: Chorismate pyruvate-lyase (165 aa).

Residues methionine 35, arginine 77, leucine 115, and glutamate 156 each coordinate substrate.

This sequence belongs to the UbiC family. Monomer.

The protein resides in the cytoplasm. The catalysed reaction is chorismate = 4-hydroxybenzoate + pyruvate. The protein operates within cofactor biosynthesis; ubiquinone biosynthesis. In terms of biological role, removes the pyruvyl group from chorismate, with concomitant aromatization of the ring, to provide 4-hydroxybenzoate (4HB) for the ubiquinone pathway. This is Chorismate pyruvate-lyase from Salmonella arizonae (strain ATCC BAA-731 / CDC346-86 / RSK2980).